We begin with the raw amino-acid sequence, 762 residues long: Cell surface protein (762 aa).

The first 26 residues, 1 to 26, serve as a signal peptide directing secretion; it reads MKNLKKLIAVVSTFALVFSAMAVGFA. 3 consecutive SLH domains span residues 27–90, 92–155, and 156–204; these read ATTP…EMAK, EKSA…WPYG, and YLAK…KEVL. O-linked (Glc...) tyrosine glycans are attached at residues Y297, Y516, Y520, and Y632.

In terms of processing, glycosylated; contains 8% carbohydrates, which correspond to about 40 to 50 sugar molecules per monomer. O-linked glycans consist of Glc, GalNAc and GlcNAc.

Its subcellular location is the secreted. The protein resides in the cell wall. The protein localises to the S-layer. In terms of biological role, the S-layer is a paracrystalline mono-layered assembly of proteins which coat the surface of bacteria. The polypeptide is Cell surface protein (Thermoanaerobacter kivui (Acetogenium kivui)).